The sequence spans 42 residues: MALVLKIFPYANAEIVTAAVTCIFMVLFGLSLGFALLKVQGE.

Residues 15-35 (IVTAAVTCIFMVLFGLSLGFA) form a helical membrane-spanning segment.

The protein belongs to the PetM family. In terms of assembly, the 4 large subunits of the cytochrome b6-f complex are cytochrome b6, subunit IV (17 kDa polypeptide, PetD), cytochrome f and the Rieske protein, while the 4 small subunits are PetG, PetL, PetM and PetN. The complex functions as a dimer.

The protein resides in the plastid. It is found in the chloroplast thylakoid membrane. Functionally, component of the cytochrome b6-f complex, which mediates electron transfer between photosystem II (PSII) and photosystem I (PSI), cyclic electron flow around PSI, and state transitions. In Trieres chinensis (Marine centric diatom), this protein is Cytochrome b6-f complex subunit 7.